The following is a 149-amino-acid chain: D-aminoacyl-tRNA deacylase (149 aa).

The Gly-cisPro motif, important for rejection of L-amino acids motif lies at 137-138; the sequence is GP.

The protein belongs to the DTD family. In terms of assembly, homodimer.

Its subcellular location is the cytoplasm. The enzyme catalyses glycyl-tRNA(Ala) + H2O = tRNA(Ala) + glycine + H(+). It carries out the reaction a D-aminoacyl-tRNA + H2O = a tRNA + a D-alpha-amino acid + H(+). Functionally, an aminoacyl-tRNA editing enzyme that deacylates mischarged D-aminoacyl-tRNAs. Also deacylates mischarged glycyl-tRNA(Ala), protecting cells against glycine mischarging by AlaRS. Acts via tRNA-based rather than protein-based catalysis; rejects L-amino acids rather than detecting D-amino acids in the active site. By recycling D-aminoacyl-tRNA to D-amino acids and free tRNA molecules, this enzyme counteracts the toxicity associated with the formation of D-aminoacyl-tRNA entities in vivo and helps enforce protein L-homochirality. The chain is D-aminoacyl-tRNA deacylase from Desulforamulus reducens (strain ATCC BAA-1160 / DSM 100696 / MI-1) (Desulfotomaculum reducens).